Here is a 179-residue protein sequence, read N- to C-terminus: MSAEKSMNVSREFSVQQIHSFTLSEKTARYLAIKRVMDIWFALIGLAIALPMIAVFSILICLETPGPAIYTQERVGKGGKPFKLYKLRSMKIDAEKSGAVWAQKQDPRVTRIGAFIRRTRIDELPQLFNVLKGDMSMIGPRPERPVFTEKFQNEIPGFTQRLGSGERRLRYDAEGKADI.

A helical transmembrane segment spans residues 39 to 59 (IWFALIGLAIALPMIAVFSIL).

Belongs to the bacterial sugar transferase family.

The protein resides in the cell membrane. It carries out the reaction di-trans,octa-cis-undecaprenyl phosphate + UDP-N-acetyl-alpha-D-galactosamine = N-acetyl-alpha-D-galactosaminyl-di-trans,octa-cis-undecaprenyl diphosphate + UMP. The protein operates within cell wall biogenesis; teichuronic acid biosynthesis. Its function is as follows. Might mediate the very first reaction in teichuronic synthesis, i.e. the formation of lipid-linked N-acetylglucosamine. The sequence is that of Putative undecaprenyl-phosphate N-acetylgalactosaminyl 1-phosphate transferase (tuaA) from Bacillus subtilis (strain 168).